The following is a 106-amino-acid chain: UPF0449 protein C19orf25 homolog (106 aa).

Belongs to the UPF0449 family.

The sequence is that of UPF0449 protein C19orf25 homolog from Xenopus tropicalis (Western clawed frog).